The following is an 876-amino-acid chain: Valine--tRNA ligase (876 aa).

The 'HIGH' region signature appears at 44–54; that stretch reads PNVTGKLHLGH. The 'KMSKS' region signature appears at 520 to 524; sequence KMSKS. Lys523 serves as a coordination point for ATP. A coiled-coil region spans residues 805 to 876; that stretch reads LEGLIDMDKE…VKARIEQLKA (72 aa).

This sequence belongs to the class-I aminoacyl-tRNA synthetase family. ValS type 1 subfamily. As to quaternary structure, monomer.

Its subcellular location is the cytoplasm. The catalysed reaction is tRNA(Val) + L-valine + ATP = L-valyl-tRNA(Val) + AMP + diphosphate. Catalyzes the attachment of valine to tRNA(Val). As ValRS can inadvertently accommodate and process structurally similar amino acids such as threonine, to avoid such errors, it has a 'posttransfer' editing activity that hydrolyzes mischarged Thr-tRNA(Val) in a tRNA-dependent manner. This Staphylococcus aureus (strain JH1) protein is Valine--tRNA ligase.